The sequence spans 229 residues: Putative N-acetylmannosamine-6-phosphate 2-epimerase (229 aa).

It belongs to the NanE family.

The enzyme catalyses an N-acyl-D-glucosamine 6-phosphate = an N-acyl-D-mannosamine 6-phosphate. Its pathway is amino-sugar metabolism; N-acetylneuraminate degradation; D-fructose 6-phosphate from N-acetylneuraminate: step 3/5. Its function is as follows. Converts N-acetylmannosamine-6-phosphate (ManNAc-6-P) to N-acetylglucosamine-6-phosphate (GlcNAc-6-P). The polypeptide is Putative N-acetylmannosamine-6-phosphate 2-epimerase (Pediococcus pentosaceus (strain ATCC 25745 / CCUG 21536 / LMG 10740 / 183-1w)).